Consider the following 153-residue polypeptide: Insulin-like growth factor 1 (153 aa).

The b stretch occupies residues 49 to 77 (GPETLCGAELVDALQFVCGDRGFYFNKPT). 3 disulfides stabilise this stretch: C54-C96, C66-C109, and C95-C100. The segment at 78 to 89 (GYGSSSRRAPQT) is c. Residues 90 to 110 (GIVDECCFRSCDLRRLEMYCA) are a. The tract at residues 111–118 (PLKPAKSA) is d. Residues 119–153 (RSVRAQRHTDMPKAQKEVHLKNASRGSAGNKNYRM) constitute a propeptide, e peptide. The tract at residues 120–153 (SVRAQRHTDMPKAQKEVHLKNASRGSAGNKNYRM) is disordered. Positions 125–138 (RHTDMPKAQKEVHL) are enriched in basic and acidic residues. Polar residues predominate over residues 142–153 (SRGSAGNKNYRM).

The protein belongs to the insulin family. In terms of assembly, forms a ternary complex with IGFR1 and ITGAV:ITGB3. Forms a ternary complex with IGFR1 and ITGA6:ITGB4. Forms a ternary complex with IGFBP3 and ALS.

Its subcellular location is the secreted. Its function is as follows. The insulin-like growth factors, isolated from plasma, are structurally and functionally related to insulin but have a much higher growth-promoting activity. May be a physiological regulator of [1-14C]-2-deoxy-D-glucose (2DG) transport and glycogen synthesis in osteoblasts. Stimulates glucose transport in bone-derived osteoblastic (PyMS) cells and is effective at much lower concentrations than insulin, not only regarding glycogen and DNA synthesis but also with regard to enhancing glucose uptake. May play a role in synapse maturation. Ca(2+)-dependent exocytosis of IGF1 is required for sensory perception of smell in the olfactory bulb. Acts as a ligand for IGF1R. Binds to the alpha subunit of IGF1R, leading to the activation of the intrinsic tyrosine kinase activity which autophosphorylates tyrosine residues in the beta subunit thus initiating a cascade of down-stream signaling events leading to activation of the PI3K-AKT/PKB and the Ras-MAPK pathways. Binds to integrins ITGAV:ITGB3 and ITGA6:ITGB4. Its binding to integrins and subsequent ternary complex formation with integrins and IGFR1 are essential for IGF1 signaling. Induces the phosphorylation and activation of IGFR1, MAPK3/ERK1, MAPK1/ERK2 and AKT1. As part of the MAPK/ERK signaling pathway, acts as a negative regulator of apoptosis in cardiomyocytes via promotion of STUB1/CHIP-mediated ubiquitination and degradation of ICER-type isoforms of CREM. The polypeptide is Insulin-like growth factor 1 (Canis lupus familiaris (Dog)).